The chain runs to 466 residues: Cytochrome b561 and DOMON domain-containing protein At3g59070 (466 aa).

The N-terminal stretch at 1–25 (MSLSSRATLVVLCCLFMLIPSFTTA) is a signal peptide. Positions 57–172 (LNSYLHFNYA…TVVNHLWQDG (116 aa)) constitute a DOMON domain. Residues 179 to 380 (RLGMHAMSGD…MEILQFKKRW (202 aa)) form the Cytochrome b561 domain. 3 consecutive transmembrane segments (helical) span residues 219–239 (IHAI…VMAA), 252–272 (WFYI…IGGL), and 287–307 (TLHT…ILSL). Heme b contacts are provided by H220, H256, H289, and H325. The next 2 membrane-spanning stretches (helical) occupy residues 327–347 (TMGY…LSIL) and 355–375 (IAYT…EILQ).

Requires heme b as cofactor.

The protein localises to the membrane. May act as a catecholamine-responsive trans-membrane electron transporter. This chain is Cytochrome b561 and DOMON domain-containing protein At3g59070, found in Arabidopsis thaliana (Mouse-ear cress).